Reading from the N-terminus, the 198-residue chain is MAEKQTAKRNRREEILQSLALMLESSDGSQRITTAKLAASVGVSEAALYRHFPSKTRMFDSLIEFIEDSLITRINLILKDEKDTTARLRLIVLLLLGFGERNPGLTRILTGHALMFEQDRLQGRINQLFERIEAQLRQVLREKRMREGEGYTTDETLLASQILAFCEGMLSRFVRSEFKYRPTDDFDARWPLIAAQLQ.

Positions 10–70 (NRREEILQSL…SLIEFIEDSL (61 aa)) constitute an HTH tetR-type domain. A DNA-binding region (H-T-H motif) is located at residues 33-52 (TTAKLAASVGVSEAALYRHF). Residues 117–144 (EQDRLQGRINQLFERIEAQLRQVLREKR) are a coiled coil.

Belongs to the nucleoid occlusion factor SlmA family. Homodimer. Interacts with FtsZ.

The protein resides in the cytoplasm. It is found in the nucleoid. Required for nucleoid occlusion (NO) phenomenon, which prevents Z-ring formation and cell division over the nucleoid. Acts as a DNA-associated cell division inhibitor that binds simultaneously chromosomal DNA and FtsZ, and disrupts the assembly of FtsZ polymers. SlmA-DNA-binding sequences (SBS) are dispersed on non-Ter regions of the chromosome, preventing FtsZ polymerization at these regions. The protein is Nucleoid occlusion factor SlmA of Escherichia coli (strain 55989 / EAEC).